We begin with the raw amino-acid sequence, 148 residues long: UPF0260 protein ECA2365 (148 aa).

Belongs to the UPF0260 family.

The chain is UPF0260 protein ECA2365 from Pectobacterium atrosepticum (strain SCRI 1043 / ATCC BAA-672) (Erwinia carotovora subsp. atroseptica).